Here is a 247-residue protein sequence, read N- to C-terminus: Orotidine 5'-phosphate decarboxylase (247 aa).

Substrate is bound by residues Asp-16, Lys-38, 66-75 (DLKFHDIPNT), Thr-130, Arg-191, Gln-200, Gly-220, and Arg-221. The active-site Proton donor is Lys-68.

This sequence belongs to the OMP decarboxylase family. Type 1 subfamily. As to quaternary structure, homodimer.

The catalysed reaction is orotidine 5'-phosphate + H(+) = UMP + CO2. The protein operates within pyrimidine metabolism; UMP biosynthesis via de novo pathway; UMP from orotate: step 2/2. Its function is as follows. Catalyzes the decarboxylation of orotidine 5'-monophosphate (OMP) to uridine 5'-monophosphate (UMP). The sequence is that of Orotidine 5'-phosphate decarboxylase from Rhodospirillum rubrum (strain ATCC 11170 / ATH 1.1.1 / DSM 467 / LMG 4362 / NCIMB 8255 / S1).